A 188-amino-acid chain; its full sequence is dCTP deaminase (188 aa).

DCTP is bound by residues Lys-111–Arg-116, Thr-135–Glu-137, Gln-156, Tyr-170, and Gln-180. The active-site Proton donor/acceptor is the Glu-137.

It belongs to the dCTP deaminase family. In terms of assembly, homotrimer.

It catalyses the reaction dCTP + H2O + H(+) = dUTP + NH4(+). It functions in the pathway pyrimidine metabolism; dUMP biosynthesis; dUMP from dCTP (dUTP route): step 1/2. Its function is as follows. Catalyzes the deamination of dCTP to dUTP. The protein is dCTP deaminase of Cupriavidus necator (strain ATCC 17699 / DSM 428 / KCTC 22496 / NCIMB 10442 / H16 / Stanier 337) (Ralstonia eutropha).